Here is a 602-residue protein sequence, read N- to C-terminus: Probable translation initiation factor IF-2 (602 aa).

The region spanning Leu-9–Lys-229 is the tr-type G domain. The G1 stretch occupies residues Gly-18–Thr-25. Position 18–25 (Gly-18–Thr-25) interacts with GTP. The segment at Glu-43–Glu-47 is G2. A G3 region spans residues Asp-82–Gly-85. GTP is bound by residues Asp-82–His-86 and Asn-136–Asp-139. The segment at Asn-136–Asp-139 is G4. Positions Ser-204–Lys-206 are G5.

It belongs to the TRAFAC class translation factor GTPase superfamily. Classic translation factor GTPase family. IF-2 subfamily.

Its function is as follows. Function in general translation initiation by promoting the binding of the formylmethionine-tRNA to ribosomes. Seems to function along with eIF-2. In Sulfolobus acidocaldarius (strain ATCC 33909 / DSM 639 / JCM 8929 / NBRC 15157 / NCIMB 11770), this protein is Probable translation initiation factor IF-2 (infB).